The sequence spans 189 residues: Elongation factor P (189 aa).

It belongs to the elongation factor P family.

It is found in the cytoplasm. It participates in protein biosynthesis; polypeptide chain elongation. Functionally, involved in peptide bond synthesis. Stimulates efficient translation and peptide-bond synthesis on native or reconstituted 70S ribosomes in vitro. Probably functions indirectly by altering the affinity of the ribosome for aminoacyl-tRNA, thus increasing their reactivity as acceptors for peptidyl transferase. The protein is Elongation factor P of Orientia tsutsugamushi (strain Ikeda) (Rickettsia tsutsugamushi).